The following is an 862-amino-acid chain: MFLNTLKAVFGTKNDREVKKYFKRVVQINALEGKYQNLSDDELKAEFEKFKEQILSGEKNENDILNDVFAIVRETGKRTLNMRHFDVQLIGGMVLHDGKIAEMKTGEGKTLVATLPVVLNAMSGKGVHVVTVNDYLAKRDAEQMSAIYNFLGFSVGVVLSSQNSDIEHKQAYDCDITYGTNNEFGFDYLRDNMKFSKAEKVQREHNFVIVDEVDSILIDEARTPLIISGPTNRTLDGYIKANEVAKQMQKGEAVLPPEKPEGDFVVDEKNRSVLITEAGIAKAEKLFGVENLYSLENAILAHQLDQALKAHNLFEKDVHYVLRNKEVIIVDEFTGRLSEGRRFSEGLHQALEAKENVKIQEESQTLADITFQNYFRMYNKLAGMTGTAQTEATEFSQIYSLDVISIPTNIPIKRQDKDDLIYKTQNEKFKAVIEEIKKANAKGQPVLVGTASIERSEVFHNMLAKEKIPHHVLNAKNHEQEALIIQDAGKKGAVTIATNMAGRGVDIKIDDEIRALGGLYIIGTERHESRRIDNQLRGRAGRQGDPGISRFYLSLEDNLLRIFGGDRIKSIMDRLGIEEGESIESRIVTRAVENAQKKVESLHFESRKHLLEYDDVANEQRKTIYRYRNELLDENYDIRAKISQNIAEYSANVMNDYMLDESGSNVNFENLKAKILYECSTQISEKDFENLSVIEMQDKLSQILENSYNEKMSRLEIKELRNIERILYLQVLDNVWREHLYQMDILKTGIGLRGYNQKDPLVEYKKESYNLFLELVNRIKFDSIKLLFSVQFNQQEAQNLENKANEENEKLLQSSVEMGASEDNLGEAEFKKVPRNAPCPCGSGKKFKECHGKSGPKQGILA.

ATP contacts are provided by residues glutamine 88, 106 to 110, and aspartate 506; that span reads GEGKT. Zn(2+) contacts are provided by cysteine 839, cysteine 841, cysteine 850, and histidine 851.

Belongs to the SecA family. As to quaternary structure, monomer and homodimer. Part of the essential Sec protein translocation apparatus which comprises SecA, SecYEG and auxiliary proteins SecDF-YajC and YidC. It depends on Zn(2+) as a cofactor.

The protein resides in the cell inner membrane. It localises to the cytoplasm. It carries out the reaction ATP + H2O + cellular proteinSide 1 = ADP + phosphate + cellular proteinSide 2.. Part of the Sec protein translocase complex. Interacts with the SecYEG preprotein conducting channel. Has a central role in coupling the hydrolysis of ATP to the transfer of proteins into and across the cell membrane, serving as an ATP-driven molecular motor driving the stepwise translocation of polypeptide chains across the membrane. The chain is Protein translocase subunit SecA from Campylobacter jejuni subsp. doylei (strain ATCC BAA-1458 / RM4099 / 269.97).